A 290-amino-acid chain; its full sequence is Transcription factor HES-1 (290 aa).

The interval 1-47 (MPADTGMEKPTASPIAGAPASASHTPDKPRSASEHRKSSKPIMEKRR) is disordered. Positions 10–23 (PTASPIAGAPASAS) are enriched in low complexity. A compositionally biased stretch (basic and acidic residues) spans 25–36 (TPDKPRSASEHR). Positions 35-92 (HRKSSKPIMEKRRRARINESLGQLKMLILDALKKDSSRHSKLEKADILEMTVKHLRNL) constitute a bHLH domain. The Orange domain occupies 111 to 144 (YRAGFNECMNEVTRFLSTCEGVNADVRARLLGHL). The short motif at 287 to 290 (WRPW) is the WRPW motif element.

In terms of assembly, transcription repression requires formation of a complex with a corepressor protein of the Groucho/TLE family.

The protein localises to the nucleus. Its function is as follows. Transcriptional repressor of genes that require a bHLH protein for their transcription. May act as a negative regulator of myogenesis by inhibiting the functions of MYOD1 and ASH1. The polypeptide is Transcription factor HES-1 (HES1) (Gallus gallus (Chicken)).